Reading from the N-terminus, the 183-residue chain is Beta-defensin 129 (183 aa).

The first 19 residues, 1–19, serve as a signal peptide directing secretion; that stretch reads MKLLFPIFASLMLQYQVNT. 3 disulfide bridges follow: Cys27/Cys53, Cys34/Cys48, and Cys38/Cys54. The tract at residues 141 to 183 is disordered; the sequence is TATSTKSNTKESRDSATASSPPAPPPPNILPTPSLELEEAEEQ. The segment covering 161–170 has biased composition (pro residues); sequence PPAPPPPNIL.

This sequence belongs to the beta-defensin family.

Its subcellular location is the secreted. Functionally, has antibacterial activity. This chain is Beta-defensin 129 (DEFB129), found in Gorilla gorilla gorilla (Western lowland gorilla).